The primary structure comprises 400 residues: Queuine tRNA-ribosyltransferase (400 aa).

Catalysis depends on D93, which acts as the Proton acceptor. Substrate-binding positions include 93–97, D166, and G247; that span reads DSGGF. The tract at residues 277–283 is RNA binding; that stretch reads GIGDVDD. The active-site Nucleophile is the D296. An RNA binding; important for wobble base 34 recognition region spans residues 301 to 305; it reads TRLGR. C338, C340, C343, and H369 together coordinate Zn(2+).

The protein belongs to the queuine tRNA-ribosyltransferase family. As to quaternary structure, homodimer. Within each dimer, one monomer is responsible for RNA recognition and catalysis, while the other monomer binds to the replacement base PreQ1. It depends on Zn(2+) as a cofactor.

It catalyses the reaction 7-aminomethyl-7-carbaguanine + guanosine(34) in tRNA = 7-aminomethyl-7-carbaguanosine(34) in tRNA + guanine. It functions in the pathway tRNA modification; tRNA-queuosine biosynthesis. Catalyzes the base-exchange of a guanine (G) residue with the queuine precursor 7-aminomethyl-7-deazaguanine (PreQ1) at position 34 (anticodon wobble position) in tRNAs with GU(N) anticodons (tRNA-Asp, -Asn, -His and -Tyr). Catalysis occurs through a double-displacement mechanism. The nucleophile active site attacks the C1' of nucleotide 34 to detach the guanine base from the RNA, forming a covalent enzyme-RNA intermediate. The proton acceptor active site deprotonates the incoming PreQ1, allowing a nucleophilic attack on the C1' of the ribose to form the product. After dissociation, two additional enzymatic reactions on the tRNA convert PreQ1 to queuine (Q), resulting in the hypermodified nucleoside queuosine (7-(((4,5-cis-dihydroxy-2-cyclopenten-1-yl)amino)methyl)-7-deazaguanosine). The sequence is that of Queuine tRNA-ribosyltransferase from Roseiflexus sp. (strain RS-1).